A 218-amino-acid chain; its full sequence is Thiamine-phosphate synthase (218 aa).

4-amino-2-methyl-5-(diphosphooxymethyl)pyrimidine is bound by residues 45–49 (QYREK) and asparagine 77. The Mg(2+) site is built by aspartate 78 and aspartate 97. Residue serine 116 coordinates 4-amino-2-methyl-5-(diphosphooxymethyl)pyrimidine. 142–144 (TKT) lines the 2-[(2R,5Z)-2-carboxy-4-methylthiazol-5(2H)-ylidene]ethyl phosphate pocket. Residue lysine 145 coordinates 4-amino-2-methyl-5-(diphosphooxymethyl)pyrimidine. 2-[(2R,5Z)-2-carboxy-4-methylthiazol-5(2H)-ylidene]ethyl phosphate is bound by residues glycine 173 and 193 to 194 (VT).

This sequence belongs to the thiamine-phosphate synthase family. Mg(2+) serves as cofactor.

It catalyses the reaction 2-[(2R,5Z)-2-carboxy-4-methylthiazol-5(2H)-ylidene]ethyl phosphate + 4-amino-2-methyl-5-(diphosphooxymethyl)pyrimidine + 2 H(+) = thiamine phosphate + CO2 + diphosphate. It carries out the reaction 2-(2-carboxy-4-methylthiazol-5-yl)ethyl phosphate + 4-amino-2-methyl-5-(diphosphooxymethyl)pyrimidine + 2 H(+) = thiamine phosphate + CO2 + diphosphate. The enzyme catalyses 4-methyl-5-(2-phosphooxyethyl)-thiazole + 4-amino-2-methyl-5-(diphosphooxymethyl)pyrimidine + H(+) = thiamine phosphate + diphosphate. Its pathway is cofactor biosynthesis; thiamine diphosphate biosynthesis; thiamine phosphate from 4-amino-2-methyl-5-diphosphomethylpyrimidine and 4-methyl-5-(2-phosphoethyl)-thiazole: step 1/1. In terms of biological role, condenses 4-methyl-5-(beta-hydroxyethyl)thiazole monophosphate (THZ-P) and 2-methyl-4-amino-5-hydroxymethyl pyrimidine pyrophosphate (HMP-PP) to form thiamine monophosphate (TMP). The sequence is that of Thiamine-phosphate synthase from Pelotomaculum thermopropionicum (strain DSM 13744 / JCM 10971 / SI).